A 319-amino-acid polypeptide reads, in one-letter code: Forkhead box protein E3 (319 aa).

Residues Met1–Arg69 are disordered. Positions Ala44 to Pro53 are enriched in low complexity. The fork-head DNA-binding region spans Lys71–Lys165.

It localises to the nucleus. In terms of biological role, transcription factor that controls lens epithelial cell growth through regulation of proliferation, apoptosis and cell cycle. During lens development, controls the ratio of the lens fiber cells to the cells of the anterior lens epithelium by regulating the rate of proliferation and differentiation. Controls lens vesicle closure and subsequent separation of the lens vesicle from ectoderm. Controls the expression of DNAJB1 in a pathway that is crucial for the development of the anterior segment of the eye. The sequence is that of Forkhead box protein E3 (FOXE3) from Homo sapiens (Human).